The primary structure comprises 95 residues: Small ribosomal subunit protein bS6 (95 aa).

Belongs to the bacterial ribosomal protein bS6 family.

Binds together with bS18 to 16S ribosomal RNA. The protein is Small ribosomal subunit protein bS6 of Symbiobacterium thermophilum (strain DSM 24528 / JCM 14929 / IAM 14863 / T).